The chain runs to 149 residues: MSEPIKLHDLRPAKGANKPKTRVGRGEASKGKTAGRGTKGTKARKQVSAAFEGGQMPIHMRLPKLKGFKNPNKVTYQVVNVADLQKHFENGGNVTIADLVSAGLVRAKQPVKVLGDGEITASVNITATKFSASAKQKIEAAGGSVTETK.

Over residues 1 to 12 the composition is skewed to basic and acidic residues; it reads MSEPIKLHDLRP. Residues 1–55 form a disordered region; it reads MSEPIKLHDLRPAKGANKPKTRVGRGEASKGKTAGRGTKGTKARKQVSAAFEGGQ.

Belongs to the universal ribosomal protein uL15 family. Part of the 50S ribosomal subunit.

Its function is as follows. Binds to the 23S rRNA. The polypeptide is Large ribosomal subunit protein uL15 (Corynebacterium kroppenstedtii (strain DSM 44385 / JCM 11950 / CIP 105744 / CCUG 35717)).